The primary structure comprises 943 residues: Nuclear factor of activated T-cells, cytoplasmic 1 (943 aa).

The interval Gly-22–Ala-48 is disordered. The segment at Pro-118–Thr-123 is calcineurin-binding. Residues Leu-126–Glu-218 form a transactivation domain A (TAD-A) region. Residues Pro-200 to Asp-298 are disordered. The segment covering Gln-201–Thr-214 has biased composition (polar residues). Tandem repeats lie at residues Ser-203–Glu-219 and Ser-233–Glu-249. Residues Ser-203–Asp-298 form a 3 X SP repeats region. Ser-233 and Ser-237 each carry phosphoserine. The span at His-236–Glu-248 shows a compositional bias: polar residues. Residue Ser-245 is modified to Phosphoserine; by PKA. The Nuclear localization signal signature appears at Lys-265–Lys-267. The residue at position 269 (Ser-269) is a Phosphoserine; by PKA. The segment covering Pro-276–His-288 has biased composition (pro residues). The stretch at Ser-282–Asp-298 is repeat 3. Ser-294 is modified (phosphoserine; by PKA). Residues Ser-310–Thr-321 carry the Nuclear export signal motif. The 183-residue stretch at Pro-410–Ala-592 folds into the RHD domain. A DNA-binding region spans residues Arg-439–Gly-446. The Nuclear localization signal signature appears at Lys-682–Lys-684. Residues Thr-703–Ser-943 are transactivation domain B (TAD-B). The disordered stretch occupies residues His-787–Thr-912. The span at Ser-846 to Thr-855 shows a compositional bias: pro residues. The Nuclear export signal motif lies at Tyr-924–Arg-933.

In terms of assembly, member of the multicomponent NFATC transcription complex that consists of at least two components, a pre-existing cytoplasmic component NFATC2 and an inducible nuclear component NFATC1. Other members such as NFATC4, NFATC3 or members of the activating protein-1 family, MAF, GATA4 and Cbp/p300 can also bind the complex. NFATC proteins bind to DNA as monomers. Interacts with HOMER2 and HOMER3; this interaction may compete with calcineurin/PPP3CA-binding and hence prevent NFATC1 dephosphorylation and activation. Interacts with TLE6/GRG6. Post-translationally, phosphorylated by NFATC-kinase and GSK3B; phosphorylation induces NFATC1 nuclear exit and dephosphorylation by calcineurin promotes nuclear import. Phosphorylation by PKA and DYRK2 negatively modulates nuclear accumulation, and promotes subsequent phosphorylation by GSK3B or casein kinase 1. Expressed in thymus, peripheral leukocytes as T-cells and spleen. Isoforms A are preferentially expressed in effector T-cells (thymus and peripheral leukocytes) whereas isoforms B and isoforms C are preferentially expressed in naive T-cells (spleen). Isoforms B are expressed in naive T-cells after first antigen exposure and isoforms A are expressed in effector T-cells after second antigen exposure. Isoforms IA are widely expressed but not detected in liver nor pancreas, neural expression is strongest in corpus callosum. Isoforms IB are expressed mostly in muscle, cerebellum, placenta and thymus, neural expression in fetal and adult brain, strongest in corpus callosum.

The protein localises to the cytoplasm. Its subcellular location is the nucleus. In terms of biological role, plays a role in the inducible expression of cytokine genes in T-cells, especially in the induction of the IL-2 or IL-4 gene transcription. Also controls gene expression in embryonic cardiac cells. Could regulate not only the activation and proliferation but also the differentiation and programmed death of T-lymphocytes as well as lymphoid and non-lymphoid cells. Required for osteoclastogenesis and regulates many genes important for osteoclast differentiation and function. In Homo sapiens (Human), this protein is Nuclear factor of activated T-cells, cytoplasmic 1 (NFATC1).